We begin with the raw amino-acid sequence, 196 residues long: Cyclin-dependent kinase inhibitor 6 (196 aa).

Disordered regions lie at residues 1 to 36 (MSER…PDSH) and 55 to 151 (ASDE…RKTP). The segment covering 124–139 (SEGLGETTTEMESSSA) has biased composition (low complexity). Thr152 carries the post-translational modification Phosphothreonine; by KIN10.

Belongs to the CDI family. ICK/KRP subfamily. Specifically interacts with CDKA-1, but not with CDKB1-1. Interacts with CYCD1-1, CYCD4-1 and RHF1A. Binds to FBL17. Interacts with KIN10. Interacts with CYCD3-1. Post-translationally, ubiquitinated by RHF1A and SCF(FBL17). Ubiquitination leads to its subsequent degradation, thus controlling cell cycle progression. In terms of processing, the phosphorylation at Thr-152 by KIN10 represses its activity. Expressed in newly formed organs such as the shoot apex. Expressed in cotyledon, primary root and marginal region of the leaves as well as in developing pollen.

It is found in the nucleus. It localises to the nucleoplasm. Down-regulated by KIN10 under a phosphorylation-dependent manner. Binds and inhibits CYCD2-1/CDKA-1 complex kinase activity. Regulates cell division which is crucial for plant growth, development and morphogenesis. May inhibit CDK kinases specifically involved in the G1/S phase transition. This chain is Cyclin-dependent kinase inhibitor 6 (KRP6), found in Arabidopsis thaliana (Mouse-ear cress).